We begin with the raw amino-acid sequence, 663 residues long: Nuclear receptor-binding protein homolog (663 aa).

Over residues 1-14 (MSNSQANAGSSGSA) the composition is skewed to low complexity. The tract at residues 1 to 112 (MSNSQANAGS…SEDESEILEE (112 aa)) is disordered. The segment covering 19-46 (LNPSGSATLVPNLTTTNASSQATPASTI) has biased composition (polar residues). Composition is skewed to low complexity over residues 47-57 (PQQQQPQQSQP) and 81-94 (VVVA…NLDS). The span at 101–111 (DDSEDESEILE) shows a compositional bias: acidic residues. The Protein kinase domain maps to 122-392 (REEVDQRDVP…ANDLLFHPLL (271 aa)). Disordered regions lie at residues 481–505 (PNFR…EPVD) and 638–663 (YVPQ…TTSN). S489, S495, and S498 each carry phosphoserine. Phosphothreonine is present on T500. Over residues 641–652 (QDQQQYQQQQQE) the composition is skewed to low complexity.

It belongs to the protein kinase superfamily. Ser/Thr protein kinase family.

The protein resides in the cytoplasm. The protein localises to the cell cortex. May play a role in subcellular trafficking between the endoplasmic reticulum and Golgi apparatus. The protein is Nuclear receptor-binding protein homolog of Drosophila pseudoobscura pseudoobscura (Fruit fly).